Consider the following 83-residue polypeptide: Arminin 3a (83 aa).

Residues 1–18 (MKTVFAILFLTFIALTCA) form the signal peptide. Residues 19 to 57 (RNYEDLKEKIKNEVEREIFEDLEEESDELENNFKKFNDA) constitute a propeptide that is removed on maturation. Position 80 is an alanine amide (Ala-80).

This sequence belongs to the arminin family. Expressed in entodermal epithelium along the body column.

The protein localises to the secreted. It is found in the target cell membrane. In terms of biological role, antimicrobial peptide with a broad-spectrum antimicrobial activity. Keeps its antibacterial activity under a wide range of salt concentrations that mimic physiological conditions of human blood, which is surprising, since Hydra is an obligate freshwater animal with nearly no salt tolerance. Does not affect red blood cells. The polypeptide is Arminin 3a (Hydra vulgaris (Hydra)).